Reading from the N-terminus, the 262-residue chain is Small ribosomal subunit protein uS2 (262 aa).

The protein belongs to the universal ribosomal protein uS2 family.

The sequence is that of Small ribosomal subunit protein uS2 from Borrelia garinii subsp. bavariensis (strain ATCC BAA-2496 / DSM 23469 / PBi) (Borreliella bavariensis).